A 112-amino-acid chain; its full sequence is Ribosomal processing cysteine protease Prp (112 aa).

Residue His-22 is the Proton donor of the active site. Residue Cys-34 is the Nucleophile of the active site.

It belongs to the Prp family. As to quaternary structure, homodimer.

Functionally, an essential cysteine protease that cleaves the N-terminus from ribosomal protein bL27. This chain is Ribosomal processing cysteine protease Prp, found in Bacillus subtilis (strain 168).